Reading from the N-terminus, the 154-residue chain is 6,7-dimethyl-8-ribityllumazine synthase (154 aa).

Residues Phe23, 57 to 59 (AFE), and 81 to 83 (AII) each bind 5-amino-6-(D-ribitylamino)uracil. A (2S)-2-hydroxy-3-oxobutyl phosphate-binding site is contributed by 86 to 87 (ST). Residue His89 is the Proton donor of the active site. A 5-amino-6-(D-ribitylamino)uracil-binding site is contributed by Phe114. Residue Arg128 participates in (2S)-2-hydroxy-3-oxobutyl phosphate binding.

It belongs to the DMRL synthase family.

The enzyme catalyses (2S)-2-hydroxy-3-oxobutyl phosphate + 5-amino-6-(D-ribitylamino)uracil = 6,7-dimethyl-8-(1-D-ribityl)lumazine + phosphate + 2 H2O + H(+). It participates in cofactor biosynthesis; riboflavin biosynthesis; riboflavin from 2-hydroxy-3-oxobutyl phosphate and 5-amino-6-(D-ribitylamino)uracil: step 1/2. Its function is as follows. Catalyzes the formation of 6,7-dimethyl-8-ribityllumazine by condensation of 5-amino-6-(D-ribitylamino)uracil with 3,4-dihydroxy-2-butanone 4-phosphate. This is the penultimate step in the biosynthesis of riboflavin. The polypeptide is 6,7-dimethyl-8-ribityllumazine synthase (Nitratiruptor sp. (strain SB155-2)).